Consider the following 208-residue polypeptide: Large ribosomal subunit protein uL3 (208 aa).

The disordered stretch occupies residues 130–168; that stretch reads GGSKTHGQSDRLRAPGSVGGSSFPSRTFKGQRMAGRKGS.

The protein belongs to the universal ribosomal protein uL3 family. As to quaternary structure, part of the 50S ribosomal subunit. Forms a cluster with proteins L14 and L19.

In terms of biological role, one of the primary rRNA binding proteins, it binds directly near the 3'-end of the 23S rRNA, where it nucleates assembly of the 50S subunit. The polypeptide is Large ribosomal subunit protein uL3 (Chloroherpeton thalassium (strain ATCC 35110 / GB-78)).